A 746-amino-acid polypeptide reads, in one-letter code: Transcription factor pbcR (746 aa).

The span at 1–12 (MYPWSSTGTSPF) shows a compositional bias: polar residues. Residues 1–40 (MYPWSSTGTSPFSHPDNEGAESGDMSMGEEQQQPHQRRQK) are disordered. The zn(2)-C6 fungal-type DNA-binding region spans 47 to 76 (CQSCRASKVRCDQPNPGMPCLRCQKSGKPC). The interval 109-131 (ELQDSAGDGETAHSTALRSPSQL) is disordered. The segment covering 120-131 (AHSTALRSPSQL) has biased composition (polar residues).

The protein resides in the nucleus. Its function is as follows. Transcription factor; part of the gene cluster that mediates the biosynthesis of the diterpene ent-pimara-8(14),15-diene (PD). Acts as a positive regulator for the cluster gene. Down-regulates the expression of the penicillin gene cluster, two putative polyketide clusters, and one putative nonribosomal peptide cluster. In Emericella nidulans (strain FGSC A4 / ATCC 38163 / CBS 112.46 / NRRL 194 / M139) (Aspergillus nidulans), this protein is Transcription factor pbcR.